Consider the following 476-residue polypeptide: MHLFINMIFLINIVFIISIIFIERRNPQTTWAWILILTFLPILGFIIYILFGQNITREKNFKRKILDDKTKQKYLNSFKSHYKLDNISLKYKDLIMMNFNNDNSTYTQRNDIDLYFDANSLFEEMIDEINKAEKFIHMEFYIFKSDEIGKKILQALTKKAKEGVEVKLLVDSIGNSIHKKDIDKLKAAGGDFKIFFPGFCKYINLRINYRNHRKILIIDSKVAFLGGFNIGDEYLGKDKNIGHWRDTHTKIKGLAINDLEGRFLLDWSYANESDLDIDLKKYFINPHSTDLPKKIIGAQIVSSGPDHTEQQIKNGYFKIINSAKKNLFIQTPYFVPDEPMLEALRLAALSGVDVKIMLPGNPDHKFMGWIANSYFESLLNAGAKIYLYEKGFLHAKTIVADSSICSVGTANMDIRSFSLNFESNIFIYNEAISKSMEEQFFKDLKVCTKVTLESFEKRSIISRIGESITRLVSPLM.

The next 2 membrane-spanning stretches (helical) occupy residues 2 to 22 and 31 to 51; these read HLFI…IIFI and WAWI…YILF. PLD phosphodiesterase domains are found at residues 207 to 234 and 389 to 416; these read INYR…GDEY and EKGF…DIRS. Catalysis depends on residues histidine 212, lysine 214, aspartate 219, histidine 394, lysine 396, and aspartate 401.

This sequence belongs to the phospholipase D family. Cardiolipin synthase subfamily.

The protein localises to the cell membrane. The enzyme catalyses 2 a 1,2-diacyl-sn-glycero-3-phospho-(1'-sn-glycerol) = a cardiolipin + glycerol. In terms of biological role, catalyzes the reversible phosphatidyl group transfer from one phosphatidylglycerol molecule to another to form cardiolipin (CL) (diphosphatidylglycerol) and glycerol. This Clostridium perfringens (strain 13 / Type A) protein is Cardiolipin synthase (cls).